The primary structure comprises 239 residues: MLDFINHDKDPETGKVMRKVRSFVLREGRLTAGQRNALDTLWPRFGLERDQGMLNPESVFGRDAPRVLEIGYGMGQSLAQMAAADPDKDFIGIEVHRPGVGALLMEIEQQGLSNLRSYCDDAVEILELCIPDNSLARVQLYFPDPWHKKKHHKRRIVQPAWVALVQRKLQPGGILHMATDWENYAEHMMEVMDAAAGFSNLAGPSAFSPRPSWRPETKFERRGEKLGHGVWDLLFEKRA.

4 residues coordinate S-adenosyl-L-methionine: Glu69, Glu94, Asp121, and Asp144. Asp144 is a catalytic residue. Residues Lys148, Asp180, and 217-220 (TKFE) each bind substrate.

This sequence belongs to the class I-like SAM-binding methyltransferase superfamily. TrmB family.

It carries out the reaction guanosine(46) in tRNA + S-adenosyl-L-methionine = N(7)-methylguanosine(46) in tRNA + S-adenosyl-L-homocysteine. The protein operates within tRNA modification; N(7)-methylguanine-tRNA biosynthesis. Its function is as follows. Catalyzes the formation of N(7)-methylguanine at position 46 (m7G46) in tRNA. This is tRNA (guanine-N(7)-)-methyltransferase from Alcanivorax borkumensis (strain ATCC 700651 / DSM 11573 / NCIMB 13689 / SK2).